An 800-amino-acid chain; its full sequence is Phenylalanine--tRNA ligase beta subunit (800 aa).

One can recognise a tRNA-binding domain in the interval 39-154 (TKDIKNLVVG…EAQVPGTDAL (116 aa)). The region spanning 408 to 483 (AFITPIDITA…RIYGYDDIPS (76 aa)) is the B5 domain. Aspartate 461, aspartate 467, glutamate 470, and glutamate 471 together coordinate Mg(2+). Residues 708–800 (PRFPGMSRDI…ALIEQGAVIR (93 aa)) form the FDX-ACB domain.

The protein belongs to the phenylalanyl-tRNA synthetase beta subunit family. Type 1 subfamily. In terms of assembly, tetramer of two alpha and two beta subunits. Requires Mg(2+) as cofactor.

The protein localises to the cytoplasm. The catalysed reaction is tRNA(Phe) + L-phenylalanine + ATP = L-phenylalanyl-tRNA(Phe) + AMP + diphosphate + H(+). In Staphylococcus aureus (strain USA300), this protein is Phenylalanine--tRNA ligase beta subunit.